A 400-amino-acid polypeptide reads, in one-letter code: tRNA-specific adenosine deaminase 1 (400 aa).

An A to I editase domain is found at 76 to 400 (SIATGVKALP…WIPTRTDDVK (325 aa)). Zn(2+) is bound at residue His101. The Proton donor role is filled by Glu103. Arg108 lines the 1D-myo-inositol hexakisphosphate pocket. The Zn(2+) site is built by Cys157 and Cys223. Residues Lys226, Arg232, Lys369, and Arg375 each coordinate 1D-myo-inositol hexakisphosphate.

Belongs to the ADAT1 family. 1D-myo-inositol hexakisphosphate serves as cofactor. Zn(2+) is required as a cofactor.

The catalysed reaction is adenosine(37) in tRNA(Ala) + H2O + H(+) = inosine(37) in tRNA(Ala) + NH4(+). In terms of biological role, deaminates adenosine-37 to inosine in tRNA-Ala. This Saccharomyces cerevisiae (strain ATCC 204508 / S288c) (Baker's yeast) protein is tRNA-specific adenosine deaminase 1 (TAD1).